The following is a 203-amino-acid chain: Type III effector protein HopBF1 (203 aa).

The tract at residues 1–23 (MFNVSNNVAPSRYQGPSSTSVTP) is disordered. Residues serine 40, glutamine 41, lysine 42, aspartate 107, isoleucine 109, and aspartate 114 each contribute to the ATP site. The active site involves aspartate 155. Glutamine 157 contributes to the ATP binding site.

The protein belongs to the HopBF1 family.

It is found in the secreted. The protein resides in the host cell. The enzyme catalyses L-seryl-[protein] + ATP = O-phospho-L-seryl-[protein] + ADP + H(+). Functionally, effector protein that targets and inactivates the eukaryotic molecular chaperone HSP90 during infection. HopBF1 is recognized by HSP90 as a host client. As a result, HopBF1 phosphorylates HSP90, leading to the inactivation of the HSP90 ATPase activity and chaperone function. In vitro, can phosphorylate the recombinant yeast HSP82 (HSP90) and human HSP 90-beta on Ser-108. The polypeptide is Type III effector protein HopBF1 (Ewingella americana (strain ATCC 33852 / DSM 4580 / CCUG 14506 / JCM 5911 / LMG 7869 / NCTC 12157 / CDC 1468-78)).